Here is a 356-residue protein sequence, read N- to C-terminus: Dual-specificity RNA methyltransferase RlmN (356 aa).

Glu92 functions as the Proton acceptor in the catalytic mechanism. Residues 98 to 334 (EKDRGTLCIS…MRRTRGEDID (237 aa)) form the Radical SAM core domain. Residues Cys105 and Cys337 are joined by a disulfide bond. 3 residues coordinate [4Fe-4S] cluster: Cys112, Cys116, and Cys119. S-adenosyl-L-methionine-binding positions include 162–163 (GE), Ser194, 216–218 (SLH), and Asn294. The active-site S-methylcysteine intermediate is the Cys337.

This sequence belongs to the radical SAM superfamily. RlmN family. The cofactor is [4Fe-4S] cluster.

Its subcellular location is the cytoplasm. It catalyses the reaction adenosine(2503) in 23S rRNA + 2 reduced [2Fe-2S]-[ferredoxin] + 2 S-adenosyl-L-methionine = 2-methyladenosine(2503) in 23S rRNA + 5'-deoxyadenosine + L-methionine + 2 oxidized [2Fe-2S]-[ferredoxin] + S-adenosyl-L-homocysteine. The catalysed reaction is adenosine(37) in tRNA + 2 reduced [2Fe-2S]-[ferredoxin] + 2 S-adenosyl-L-methionine = 2-methyladenosine(37) in tRNA + 5'-deoxyadenosine + L-methionine + 2 oxidized [2Fe-2S]-[ferredoxin] + S-adenosyl-L-homocysteine. Specifically methylates position 2 of adenine 2503 in 23S rRNA and position 2 of adenine 37 in tRNAs. m2A2503 modification seems to play a crucial role in the proofreading step occurring at the peptidyl transferase center and thus would serve to optimize ribosomal fidelity. The polypeptide is Dual-specificity RNA methyltransferase RlmN (Vesicomyosocius okutanii subsp. Calyptogena okutanii (strain HA)).